A 523-amino-acid chain; its full sequence is Volkensin (523 aa).

Residues Y74, Y113, E162, and R165 contribute to the active site. 111–113 (GGY) serves as a coordination point for AMP. 2 disulfide bridges follow: C245/C269 and C285/C304. A propeptide spans 251-265 (QSDSPLVIRSFVDRN) (linker peptide). The Ricin B-type lectin 1 domain maps to 270–397 (PSGETTAFIV…YAASQAWRVT (128 aa)). Residues 287–291 (DVKVE), Q300, K305, and N311 contribute to the a carbohydrate site. The cysteines at positions 328 and 343 are disulfide-linked. A carbohydrate is bound by residues N358 and N398. N-linked (GlcNAc...) asparagine glycosylation is found at N358 and N398. Residues 400 to 523 (TVPTVTTIVG…HGNSNQQWFL (124 aa)) enclose the Ricin B-type lectin 2 domain. 2 cysteine pairs are disulfide-bonded: C414-C427 and C453-C471.

In the N-terminal section; belongs to the ribosome-inactivating protein family. Type 2 RIP subfamily. Disulfide-linked dimer of A and B chains. In terms of processing, N-glycosylated. Contains mannose and galactose. As to expression, expressed in roots (at protein level). Expressed in seeds (at protein level).

The catalysed reaction is Endohydrolysis of the N-glycosidic bond at one specific adenosine on the 28S rRNA.. Hemagglutinating activity is inhibited by galactose and structurally related sugars. Functionally, has N-glycosidase activity and is responsible for inhibiting protein synthesis through the catalytic inactivation of 60S ribosomal subunits by removing a specific adenine of 28S rRNA. Inhibits GTP-dependent binding of EF2 (elongation factor 2) to ribosomes. In terms of biological role, binds to cell receptors and probably facilitates the entry into the cell of the A chain. Also acts as a galactose-specific lectin responsible for cell agglutination. This chain is Volkensin, found in Adenia volkensii (Kilyambiti plant).